A 967-amino-acid polypeptide reads, in one-letter code: Probable serine/threonine-protein kinase DDB_G0290621 (967 aa).

Disordered stretches follow at residues 65–122, 215–251, and 287–326; these read EDSD…KEKE, SSLS…SSSS, and QQQL…SPRT. Residues 66–94 are compositionally biased toward acidic residues; sequence DSDEDDDDEEDEEDEEDSDEEEDDDVVED. The segment covering 95 to 122 has biased composition (basic and acidic residues); sequence DNTKDIGKSRDSDKSIKGKEKGKEKEKE. Low complexity predominate over residues 297–326; the sequence is QQQQQQQQQQQQQNNSMLQQSNNNNISPRT. The 266-residue stretch at 345 to 610 folds into the Protein kinase domain; that stretch reads FNDSNKIGEG…EIRSRLSEII (266 aa). ATP is bound by residues 351–359 and Lys-368; that span reads IGEGGQCSI. Asp-467 functions as the Proton acceptor in the catalytic mechanism. 3 disordered regions span residues 634-667, 700-752, and 862-882; these read DDSL…NNNN, STSN…NNNI, and TSSS…NPSN. Residues 639 to 666 show a composition bias toward low complexity; the sequence is NNNNNNNQNNNNQNNNNNNNNNNNNNNN. The segment covering 863-882 has biased composition (low complexity); it reads SSSSNKNNNNNNNDNNNPSN.

This sequence belongs to the protein kinase superfamily. TKL Ser/Thr protein kinase family.

It catalyses the reaction L-seryl-[protein] + ATP = O-phospho-L-seryl-[protein] + ADP + H(+). The catalysed reaction is L-threonyl-[protein] + ATP = O-phospho-L-threonyl-[protein] + ADP + H(+). In Dictyostelium discoideum (Social amoeba), this protein is Probable serine/threonine-protein kinase DDB_G0290621.